The primary structure comprises 434 residues: Zinc carboxypeptidase (434 aa).

A signal peptide spans 1 to 33 (MSPKRRRLMAAALGACVALVLPLHAGSAQPSTA). A propeptide spans 34–114 (KTPERTVFEV…DFTDPQVGTQ (81 aa)) (activation peptide). The Peptidase M14 domain occupies 122–423 (GYHNFQETVT…SAVELFLSYS (302 aa)). Zn(2+) is bound by residues histidine 183 and glutamate 186. The disordered stretch occupies residues 270 to 295 (GSSSSGSSETTAARRRSPPRRSPHPH). Over residues 282–293 (ARRRSPPRRSPH) the composition is skewed to basic residues. Zn(2+) is bound at residue histidine 315. Catalysis depends on glutamate 388, which acts as the Proton donor/acceptor.

This sequence belongs to the peptidase M14 family. It depends on Zn(2+) as a cofactor.

The enzyme catalyses Releases a C-terminal residue, which may be hydrophobic or positively charged.. Its function is as follows. Carboxypeptidase that possesses the specificities of both mammalian Cpase A and B. Thus shows broad substrate specificity, being able to cleave Cbz-Gly-Leu, Cbz-Gly-Val, Cbz-Gly-Phe, Cbz-Gly-Lys and Bz-Gly-Arg in vitro. This Saccharothrix mutabilis subsp. capreolus (Streptomyces capreolus) protein is Zinc carboxypeptidase.